The following is a 283-amino-acid chain: Prolyl 4-hydroxylase 1 (283 aa).

The Cytoplasmic portion of the chain corresponds to 1-6; it reads MAPAMK. Residues 7 to 27 form a helical; Signal-anchor for type II membrane protein membrane-spanning segment; sequence IVFGLLTFVTVGMVIGSLLQL. The Lumenal segment spans residues 28-283; that stretch reads AFINRLEDSY…TKWMRQKATS (256 aa). The Fe2OG dioxygenase domain maps to 162 to 279; sequence NGELIQVLRY…KWSATKWMRQ (118 aa). Residues histidine 180, aspartate 182, and histidine 260 each coordinate Fe cation. Lysine 270 lines the 2-oxoglutarate pocket.

This sequence belongs to the P4HA family. Fe(2+) is required as a cofactor. The cofactor is L-ascorbate.

The protein localises to the endoplasmic reticulum membrane. The enzyme catalyses L-prolyl-[collagen] + 2-oxoglutarate + O2 = trans-4-hydroxy-L-prolyl-[collagen] + succinate + CO2. Catalyzes the post-translational formation of 4-hydroxyproline in -Xaa-Pro-Gly- sequences in proline-rich peptide sequences of plant glycoproteins and other proteins. Hydroxylates preferentially prolines in second positions in the -Pro-Pro-Gly-triplets. Hydroxyprolines are important constituent of many plant cell wall glycoproteins such as extensins, hydroxyproline-rich glycoproteins, lectins and arabinogalactan proteins. Can hydroxylate collagen-like peptides and hypoxia-inducible transcription factor peptides. The protein is Prolyl 4-hydroxylase 1 of Arabidopsis thaliana (Mouse-ear cress).